The chain runs to 348 residues: Putative methylthioribose-1-phosphate isomerase (348 aa).

Residues 55–57, Arg-98, and Gln-203 contribute to the substrate site; that span reads RGA. Residue Asp-244 is the Proton donor of the active site. Position 253–254 (253–254) interacts with substrate; sequence NK.

It belongs to the eIF-2B alpha/beta/delta subunits family. MtnA subfamily.

It carries out the reaction 5-(methylsulfanyl)-alpha-D-ribose 1-phosphate = 5-(methylsulfanyl)-D-ribulose 1-phosphate. Functionally, catalyzes the interconversion of methylthioribose-1-phosphate (MTR-1-P) into methylthioribulose-1-phosphate (MTRu-1-P). The sequence is that of Putative methylthioribose-1-phosphate isomerase from Methanosarcina acetivorans (strain ATCC 35395 / DSM 2834 / JCM 12185 / C2A).